A 314-amino-acid polypeptide reads, in one-letter code: 2,3-dihydroxyphenylpropionate/2,3-dihydroxicinnamic acid 1,2-dioxygenase (314 aa).

His115 serves as the catalytic Proton donor. His179 serves as the catalytic Proton acceptor.

Belongs to the LigB/MhpB extradiol dioxygenase family. In terms of assembly, homotetramer. The cofactor is Fe(2+).

It catalyses the reaction 3-(2,3-dihydroxyphenyl)propanoate + O2 = (2Z,4E)-2-hydroxy-6-oxonona-2,4-dienedioate + H(+). It carries out the reaction (2E)-3-(2,3-dihydroxyphenyl)prop-2-enoate + O2 = (2Z,4E,7E)-2-hydroxy-6-oxonona-2,4,7-trienedioate + H(+). The protein operates within aromatic compound metabolism; 3-phenylpropanoate degradation. Catalyzes the non-heme iron(II)-dependent oxidative cleavage of 2,3-dihydroxyphenylpropionic acid and 2,3-dihydroxicinnamic acid into 2-hydroxy-6-ketononadienedioate and 2-hydroxy-6-ketononatrienedioate, respectively. The polypeptide is 2,3-dihydroxyphenylpropionate/2,3-dihydroxicinnamic acid 1,2-dioxygenase (Escherichia coli O157:H7).